The sequence spans 444 residues: Signal recognition particle 54 kDa protein (444 aa).

Residues 104–111 (GLQGSGKT), 184–188 (DTAGR), and 242–245 (TKLD) each bind GTP.

Belongs to the GTP-binding SRP family. SRP54 subfamily. As to quaternary structure, part of the signal recognition particle protein translocation system, which is composed of SRP and FtsY. Archaeal SRP consists of a 7S RNA molecule of 300 nucleotides and two protein subunits: SRP54 and SRP19.

The protein localises to the cytoplasm. The enzyme catalyses GTP + H2O = GDP + phosphate + H(+). In terms of biological role, involved in targeting and insertion of nascent membrane proteins into the cytoplasmic membrane. Binds to the hydrophobic signal sequence of the ribosome-nascent chain (RNC) as it emerges from the ribosomes. The SRP-RNC complex is then targeted to the cytoplasmic membrane where it interacts with the SRP receptor FtsY. This Methanothrix thermoacetophila (strain DSM 6194 / JCM 14653 / NBRC 101360 / PT) (Methanosaeta thermophila) protein is Signal recognition particle 54 kDa protein.